A 103-amino-acid polypeptide reads, in one-letter code: N(4)-acetylcytidine amidohydrolase (103 aa).

The ASCH domain occupies 6–92 (TFFERFEQDI…VIQEIYPGLE (87 aa)). The active-site Proton acceptor is Lys-20. Thr-23 acts as the Nucleophile in catalysis. Catalysis depends on Glu-73, which acts as the Proton donor.

Belongs to the N(4)-acetylcytidine amidohydrolase family.

It carries out the reaction N(4)-acetylcytidine + H2O = cytidine + acetate + H(+). The enzyme catalyses N(4)-acetyl-2'-deoxycytidine + H2O = 2'-deoxycytidine + acetate + H(+). The catalysed reaction is N(4)-acetylcytosine + H2O = cytosine + acetate + H(+). Its function is as follows. Catalyzes the hydrolysis of N(4)-acetylcytidine (ac4C). The sequence is that of N(4)-acetylcytidine amidohydrolase from Shewanella sp. (strain MR-4).